A 445-amino-acid chain; its full sequence is Protein cereblon (445 aa).

The tract at residues 1-50 (MAAEEGGDGRRNMGNPPPPAPAESEEEDDNEMEVEDQDGKEAEKPNMINF) is disordered. Acidic residues predominate over residues 23–36 (ESEEEDDNEMEVED). A Lon N-terminal domain is found at 82 to 321 (IPVLPHVMVM…CELDIMNKCT (240 aa)). Positions 320–428 (CTSLCCKQCQ…LTRSALLPRI (109 aa)) constitute a CULT domain. 2 residues coordinate Zn(2+): C325 and C328. Positions 380, 382, and 388 each coordinate (S)-thalidomide. Zn(2+) contacts are provided by C393 and C396.

It belongs to the CRBN family. As to quaternary structure, component of a DCX (DDB1-CUL4-X-box) protein ligase complex. Interacts directly with DDB1.

It localises to the cytoplasm. The protein localises to the nucleus. It participates in protein modification; protein ubiquitination. Its function is as follows. Substrate recognition component of a DCX (DDB1-CUL4-X-box) E3 protein ligase complex that mediates the ubiquitination and subsequent proteasomal degradation of target proteins, such as MEIS2. Normal degradation of key regulatory proteins is required for normal limb outgrowth and expression of the fibroblast growth factor FGF8. Maintains presynaptic glutamate release and consequently cognitive functions, such as memory and learning, by negatively regulating large-conductance calcium-activated potassium (BK) channels in excitatory neurons. Likely to function by regulating the assembly and neuronal surface expression of BK channels via its interaction with KCNT1. May also be involved in regulating anxiety-like behaviors via a BK channel-independent mechanism. The chain is Protein cereblon (CRBN) from Gallus gallus (Chicken).